The sequence spans 338 residues: Large ribosomal subunit protein uL3 (338 aa).

Positions 1 to 37 (MPQPSRPRKGSMGFSPRKRAESEVPRIRSWASNDGAP) are disordered.

The protein belongs to the universal ribosomal protein uL3 family. In terms of assembly, part of the 50S ribosomal subunit. Forms a cluster with proteins L14 and L24e.

Its function is as follows. One of the primary rRNA binding proteins, it binds directly near the 3'-end of the 23S rRNA, where it nucleates assembly of the 50S subunit. The sequence is that of Large ribosomal subunit protein uL3 from Haloquadratum walsbyi (strain DSM 16790 / HBSQ001).